Here is a 269-residue protein sequence, read N- to C-terminus: Zinc transporter ZupT (269 aa).

The next 8 membrane-spanning stretches (helical) occupy residues 11–31 (IALA…LLVL), 40–60 (LLAF…LSEI), 80–100 (YGTL…HFIP), 125–145 (ALLT…ATFF), 158–178 (AFAI…PVYF), 187–207 (FSAS…GYWL), 217–237 (FGWV…DELL), and 249–269 (TVYG…LFKW). 2 residues coordinate Fe(2+): Asn-136 and Glu-139. The Zn(2+) site is built by Glu-139 and His-164. Positions 165, 168, and 197 each coordinate Fe(2+). Zn(2+) is bound at residue Glu-168.

Belongs to the ZIP transporter (TC 2.A.5) family. ZupT subfamily.

Its subcellular location is the cell inner membrane. The enzyme catalyses Zn(2+)(in) = Zn(2+)(out). In terms of biological role, mediates zinc uptake. May also transport other divalent cations. This Stenotrophomonas maltophilia (strain K279a) protein is Zinc transporter ZupT.